A 251-amino-acid chain; its full sequence is Tropomyosin-2 (251 aa).

Residues 1-251 (MSGEEKLGKL…DTVADEPDDE (251 aa)) adopt a coiled-coil conformation.

Belongs to the tropomyosin family. As to quaternary structure, homodimer. Striated muscle specific.

This is Tropomyosin-2 (TPM2) from Podocoryna carnea (Hydrozoan).